Here is a 144-residue protein sequence, read N- to C-terminus: Large ribosomal subunit protein uL16 (144 aa).

It belongs to the universal ribosomal protein uL16 family. In terms of assembly, part of the 50S ribosomal subunit.

In terms of biological role, binds 23S rRNA and is also seen to make contacts with the A and possibly P site tRNAs. This chain is Large ribosomal subunit protein uL16, found in Lactiplantibacillus plantarum (strain ATCC BAA-793 / NCIMB 8826 / WCFS1) (Lactobacillus plantarum).